A 139-amino-acid polypeptide reads, in one-letter code: Transcription antitermination protein NusB (139 aa).

The protein belongs to the NusB family.

Its function is as follows. Involved in transcription antitermination. Required for transcription of ribosomal RNA (rRNA) genes. Binds specifically to the boxA antiterminator sequence of the ribosomal RNA (rrn) operons. This Erwinia tasmaniensis (strain DSM 17950 / CFBP 7177 / CIP 109463 / NCPPB 4357 / Et1/99) protein is Transcription antitermination protein NusB.